An 843-amino-acid chain; its full sequence is Proto-oncogene vav (843 aa).

Residues 1 to 119 (MELWRQCTHW…YTLSALSWTP (119 aa)) form the Calponin-homology (CH) domain. Residues 194-373 (KRCCCLREIQ…RDLAQCVNEV (180 aa)) enclose the DH domain. In terms of domain architecture, PH spans 402 to 504 (RPKIDGELKI…WMEQFEMAIS (103 aa)). The segment at 515 to 564 (GHDFQMFSFEETTSCKACQMLLRGTFYQGYRCYRCRAPAHKECLGRVPPC) adopts a Phorbol-ester/DAG-type zinc-finger fold. The region spanning 590 to 658 (LGLPKMEVCQ…PCNRVRPYVH (69 aa)) is the SH3 1 domain. One can recognise an SH2 domain in the interval 669 to 763 (WYAGPMERAG…SLDTTLQFPY (95 aa)). One can recognise an SH3 2 domain in the interval 780 to 840 (KYFGTAKARY…PSNYVEEDYS (61 aa)). Residues Tyr824 and Tyr842 each carry the phosphotyrosine modification.

Interacts with SHB. Interacts with APS, DOCK2, GRB2, GRB3, DOCK2, SLA, TEC and ZNF655/VIK. Interacts with SIAH2; without leading to its degradation. Associates with BLNK, PLCG1, GRB2 and NCK1 in a B-cell antigen receptor-dependent fashion. Interacts with CBLB; which inhibits tyrosine phosphorylation and down-regulates activity. May interact with CCPG1. Interacts with CLNK. Interacts with THEMIS2. Interacts with NEK3 and this interaction is prolactin-dependent. Interacts with ITK. Interacts with PTK2B/PYK2. Interacts with HCK. Interacts with PTK2B/PYK2. Interacts (via SH2 domain) with SYK. Interacts with ANKRD54. Interacts with CD6. Interacts with LCP2; this interaction plays a role in TCR-mediated cytokine production. Phosphorylated by FYN. Phosphorylated on tyrosine residues by HCK in response to IFNG and bacterial lipopolysaccharide (LPS).

Functionally, couples tyrosine kinase signals with the activation of the Rho/Rac GTPases, thus leading to cell differentiation and/or proliferation. This is Proto-oncogene vav (Vav1) from Rattus norvegicus (Rat).